The chain runs to 185 residues: Ribosome-recycling factor (185 aa).

It belongs to the RRF family.

Its subcellular location is the cytoplasm. Functionally, responsible for the release of ribosomes from messenger RNA at the termination of protein biosynthesis. May increase the efficiency of translation by recycling ribosomes from one round of translation to another. The sequence is that of Ribosome-recycling factor from Pseudomonas aeruginosa (strain LESB58).